The primary structure comprises 92 residues: C-C motif chemokine 4 (92 aa).

An N-terminal signal peptide occupies residues 1–23; that stretch reads MKLCVTVLSLLVLAAAFCSPALS. 2 disulfide bridges follow: C34/C58 and C35/C74.

This sequence belongs to the intercrine beta (chemokine CC) family. As to quaternary structure, homodimer. Interacts with CCR5. In terms of tissue distribution, detected in peripheral blood mononuclear cells and lymph nodes.

It is found in the secreted. Its function is as follows. Monokine with inflammatory and chemokinetic properties. In Macaca mulatta (Rhesus macaque), this protein is C-C motif chemokine 4 (CCL4).